Consider the following 142-residue polypeptide: Large ribosomal subunit protein bL17 (142 aa).

It belongs to the bacterial ribosomal protein bL17 family. As to quaternary structure, part of the 50S ribosomal subunit. Contacts protein L32.

The protein is Large ribosomal subunit protein bL17 of Chlamydia felis (strain Fe/C-56) (Chlamydophila felis).